We begin with the raw amino-acid sequence, 169 residues long: Photosystem I assembly protein Ycf3 (169 aa).

3 TPR repeats span residues 35-68 (AFTY…EIDP), 72-105 (SYIL…NPSL), and 120-153 (GEQA…APNN).

This sequence belongs to the Ycf3 family.

The protein resides in the plastid. Its subcellular location is the chloroplast thylakoid membrane. Functionally, essential for the assembly of the photosystem I (PSI) complex. May act as a chaperone-like factor to guide the assembly of the PSI subunits. The chain is Photosystem I assembly protein Ycf3 from Staurastrum punctulatum (Green alga).